The sequence spans 467 residues: tRNA(Ile)-lysidine synthase (467 aa).

An ATP-binding site is contributed by 26–31 (SGGPDS).

The protein belongs to the tRNA(Ile)-lysidine synthase family.

The protein localises to the cytoplasm. The catalysed reaction is cytidine(34) in tRNA(Ile2) + L-lysine + ATP = lysidine(34) in tRNA(Ile2) + AMP + diphosphate + H(+). Functionally, ligates lysine onto the cytidine present at position 34 of the AUA codon-specific tRNA(Ile) that contains the anticodon CAU, in an ATP-dependent manner. Cytidine is converted to lysidine, thus changing the amino acid specificity of the tRNA from methionine to isoleucine. The protein is tRNA(Ile)-lysidine synthase of Clostridium tetani (strain Massachusetts / E88).